The following is a 384-amino-acid chain: tRNA(Met) cytidine acetate ligase (384 aa).

ATP is bound by residues 7-20, Gly101, Asn153, and Arg178; that span reads VAEY…HEFL.

The protein belongs to the TmcAL family.

It localises to the cytoplasm. It catalyses the reaction cytidine(34) in elongator tRNA(Met) + acetate + ATP = N(4)-acetylcytidine(34) in elongator tRNA(Met) + AMP + diphosphate. In terms of biological role, catalyzes the formation of N(4)-acetylcytidine (ac(4)C) at the wobble position of elongator tRNA(Met), using acetate and ATP as substrates. First activates an acetate ion to form acetyladenylate (Ac-AMP) and then transfers the acetyl group to tRNA to form ac(4)C34. The chain is tRNA(Met) cytidine acetate ligase from Lactobacillus delbrueckii subsp. bulgaricus (strain ATCC 11842 / DSM 20081 / BCRC 10696 / JCM 1002 / NBRC 13953 / NCIMB 11778 / NCTC 12712 / WDCM 00102 / Lb 14).